The following is a 217-amino-acid chain: Large ribosomal subunit protein uL3 (217 aa).

Belongs to the universal ribosomal protein uL3 family. In terms of assembly, part of the 50S ribosomal subunit. Forms a cluster with proteins L14 and L19.

In terms of biological role, one of the primary rRNA binding proteins, it binds directly near the 3'-end of the 23S rRNA, where it nucleates assembly of the 50S subunit. This Mycobacterium bovis (strain ATCC BAA-935 / AF2122/97) protein is Large ribosomal subunit protein uL3.